A 251-amino-acid polypeptide reads, in one-letter code: Hydroxyacylglutathione hydrolase (251 aa).

Residues histidine 53, histidine 55, aspartate 57, histidine 58, histidine 110, aspartate 127, and histidine 165 each contribute to the Zn(2+) site.

The protein belongs to the metallo-beta-lactamase superfamily. Glyoxalase II family. Monomer. Zn(2+) serves as cofactor.

It carries out the reaction an S-(2-hydroxyacyl)glutathione + H2O = a 2-hydroxy carboxylate + glutathione + H(+). The protein operates within secondary metabolite metabolism; methylglyoxal degradation; (R)-lactate from methylglyoxal: step 2/2. In terms of biological role, thiolesterase that catalyzes the hydrolysis of S-D-lactoyl-glutathione to form glutathione and D-lactic acid. The polypeptide is Hydroxyacylglutathione hydrolase (Enterobacter sp. (strain 638)).